Reading from the N-terminus, the 217-residue chain is uncharacterized protein (217 aa).

To M.tuberculosis Rv2926c.

This is an uncharacterized protein from Mycobacterium leprae (strain TN).